We begin with the raw amino-acid sequence, 181 residues long: CDP-diacylglycerol--glycerol-3-phosphate 3-phosphatidyltransferase (181 aa).

Transmembrane regions (helical) follow at residues 8-28 (PNYL…AFYI), 35-55 (KLGA…GYIA), 64-84 (FGKM…IIML), and 148-168 (IIYL…LTII).

The protein belongs to the CDP-alcohol phosphatidyltransferase class-I family.

It is found in the cell membrane. It carries out the reaction a CDP-1,2-diacyl-sn-glycerol + sn-glycerol 3-phosphate = a 1,2-diacyl-sn-glycero-3-phospho-(1'-sn-glycero-3'-phosphate) + CMP + H(+). The protein operates within phospholipid metabolism; phosphatidylglycerol biosynthesis; phosphatidylglycerol from CDP-diacylglycerol: step 1/2. This protein catalyzes the committed step to the synthesis of the acidic phospholipids. The protein is CDP-diacylglycerol--glycerol-3-phosphate 3-phosphatidyltransferase (pgsA) of Rickettsia felis (strain ATCC VR-1525 / URRWXCal2) (Rickettsia azadi).